The primary structure comprises 585 residues: GRR1-like protein 1 (585 aa).

An F-box domain is found at 1–48; that stretch reads MGLRFPPKVLEHILSFIDSNEDRNSVSLVCKSWFETERKTRKRVFVGN. Lys-70 is a binding site for 1D-myo-inositol hexakisphosphate. The segment at 77–78 is interaction with auxin-responsive proteins; sequence DY. 1D-myo-inositol hexakisphosphate is bound by residues 109–110 and Arg-340; that span reads KR. Residues 343–348 form an interaction with auxin-responsive proteins region; sequence PSEPDL. Residue 397–399 coordinates 1D-myo-inositol hexakisphosphate; it reads CFR. The interval 401 to 405 is interaction with auxin-responsive proteins; it reads CVIEP. A 1D-myo-inositol hexakisphosphate-binding site is contributed by Arg-432. Positions 460 to 461 are interaction with auxin-responsive proteins; sequence AF. Residues 480-481 and Arg-505 each bind 1D-myo-inositol hexakisphosphate; that span reads KK.

In terms of assembly, part of a SCF (SKP1-cullin-F-box) protein ligase complex. Interacts with CUL1, SKP1A/ASK1 and SKP1B/ASK2. Interacts with Aux/IAA proteins (IAA7 and IAA12) in an auxin-dependent manner. As to expression, ubiquitous.

The protein localises to the nucleus. Its pathway is protein modification; protein ubiquitination. Its function is as follows. Component of SCF(ASK-cullin-F-box) E3 ubiquitin ligase complexes, which may mediate the ubiquitination and subsequent proteasomal degradation of target proteins. Auxin receptor that mediates Aux/IAA proteins proteasomal degradation and auxin-regulated transcription. Involved in embryogenesis regulation by auxin. Confers sensitivity to the virulent bacterial pathogen P.syringae. Mediates glucose repression in yeast. This Arabidopsis thaliana (Mouse-ear cress) protein is GRR1-like protein 1 (GRH1).